Reading from the N-terminus, the 185-residue chain is Pyridoxal 5'-phosphate synthase subunit PdxT (185 aa).

46–48 (GES) lines the L-glutamine pocket. The active-site Nucleophile is the cysteine 78. L-glutamine is bound by residues arginine 106 and 132–133 (IR). Active-site charge relay system residues include histidine 168 and glutamate 170.

This sequence belongs to the glutaminase PdxT/SNO family. As to quaternary structure, in the presence of PdxS, forms a dodecamer of heterodimers. Only shows activity in the heterodimer.

The enzyme catalyses aldehydo-D-ribose 5-phosphate + D-glyceraldehyde 3-phosphate + L-glutamine = pyridoxal 5'-phosphate + L-glutamate + phosphate + 3 H2O + H(+). It carries out the reaction L-glutamine + H2O = L-glutamate + NH4(+). It participates in cofactor biosynthesis; pyridoxal 5'-phosphate biosynthesis. In terms of biological role, catalyzes the hydrolysis of glutamine to glutamate and ammonia as part of the biosynthesis of pyridoxal 5'-phosphate. The resulting ammonia molecule is channeled to the active site of PdxS. The polypeptide is Pyridoxal 5'-phosphate synthase subunit PdxT (Corynebacterium diphtheriae (strain ATCC 700971 / NCTC 13129 / Biotype gravis)).